The primary structure comprises 170 residues: Transcriptional repressor NrdR (170 aa).

A zinc finger spans residues 3–34; that stretch reads CPFCRHPDSRVVDSRTSEDGSSIRRRRQCPEC. An ATP-cone domain is found at 46-136; it reads LSVVKRSGVA…VYRGFSSLED (91 aa). Positions 148–170 are disordered; it reads RENEGDPDADGSADAPVRLTTSV.

The protein belongs to the NrdR family. Requires Zn(2+) as cofactor.

Its function is as follows. Negatively regulates transcription of bacterial ribonucleotide reductase nrd genes and operons by binding to NrdR-boxes. The polypeptide is Transcriptional repressor NrdR (Beutenbergia cavernae (strain ATCC BAA-8 / DSM 12333 / CCUG 43141 / JCM 11478 / NBRC 16432 / NCIMB 13614 / HKI 0122)).